Reading from the N-terminus, the 345-residue chain is Protein-arginine kinase (345 aa).

Residues 15 to 245 form the Phosphagen kinase C-terminal domain; sequence LVISSRIRLA…LQIINQEIIS (231 aa). Residues 18-22, His-82, Arg-116, 167-171, and 198-203 each bind ATP; these read SSRIR, RASVM, and RGLYGE. The RDXXRA motif of the pArg binding pocket involved in allosteric regulation motif lies at 328 to 333; it reads RDFNRA.

This sequence belongs to the ATP:guanido phosphotransferase family.

It catalyses the reaction L-arginyl-[protein] + ATP = N(omega)-phospho-L-arginyl-[protein] + ADP + H(+). With respect to regulation, appears to be allosterically activated by the binding of pArg-containing polypeptides to the pArg-binding pocket localized in the C-terminal domain of McsB. Functionally, catalyzes the specific phosphorylation of arginine residues in proteins. The polypeptide is Protein-arginine kinase (Clostridium kluyveri (strain NBRC 12016)).